A 247-amino-acid chain; its full sequence is TLC domain-containing protein 1 (247 aa).

A signal peptide spans 1 to 35 (MPRLLHPALPLLLGATLTFRALRRALCRLPLPVHV). Residues 36-46 (RADPLRTWRWH) lie on the Extracellular side of the membrane. The TLC domain maps to 40–234 (LRTWRWHNLL…LLRSDFCPEH (195 aa)). The helical transmembrane segment at 47 to 67 (NLLVSFAHSIVSGIWALLCVW) threads the bilayer. Residues 68 to 83 (QTPDMLVEIETAWSLS) are Cytoplasmic-facing. Residues 84–104 (GYLLVCFSAGYFIHDTVDIVA) form a helical membrane-spanning segment. The Extracellular segment spans residues 105–123 (SGQTRASWEYLVHHVMAMG). Positions 124-144 (AFFSGIFWSSFVGGGVLTLLV) form an intramembrane region, helical. Residues 145 to 173 (EVSNIFLTIRMMMKISNAQDHLLYRVNKY) are Extracellular-facing. A helical membrane pass occupies residues 174–194 (VNLVMYFLFRLAPQAYLTHFF). At 195–201 (LRYVNQR) the chain is on the cytoplasmic side. Residues 202–222 (TLGTFLLGILLMLDVMIIIYF) traverse the membrane as a helical segment. Residues 223–247 (SRLLRSDFCPEHVPKKQHKDKFLTE) lie on the Extracellular side of the membrane.

Its subcellular location is the cell membrane. Regulates the composition and fluidity of the plasma membrane. Inhibits the incorporation of membrane-fluidizing phospholipids containing omega-3 long-chain polyunsaturated fatty acids (LCPUFA) and thereby promotes membrane rigidity. Does not appear to have any effect on LCPUFA synthesis. The chain is TLC domain-containing protein 1 (TLCD1) from Homo sapiens (Human).